The sequence spans 337 residues: Glyceraldehyde-3-phosphate dehydrogenase (337 aa).

NADP(+)-binding positions include 11 to 12 (TV), 34 to 35 (TR), and Gly-110. 139–141 (SCN) is a binding site for D-glyceraldehyde 3-phosphate. Catalysis depends on Cys-140, which acts as the Nucleophile. Residue Asp-171 participates in NADP(+) binding. Residue 194-195 (HG) coordinates D-glyceraldehyde 3-phosphate. An NADP(+)-binding site is contributed by Gln-300.

It belongs to the glyceraldehyde-3-phosphate dehydrogenase family. In terms of assembly, homotetramer.

Its subcellular location is the cytoplasm. It carries out the reaction D-glyceraldehyde 3-phosphate + phosphate + NADP(+) = (2R)-3-phospho-glyceroyl phosphate + NADPH + H(+). The enzyme catalyses D-glyceraldehyde 3-phosphate + phosphate + NAD(+) = (2R)-3-phospho-glyceroyl phosphate + NADH + H(+). The protein operates within carbohydrate degradation; glycolysis; pyruvate from D-glyceraldehyde 3-phosphate: step 1/5. Its function is as follows. Exhibits a dual-cofactor specificity, with a marked preference for NADP(+) over NAD(+). The protein is Glyceraldehyde-3-phosphate dehydrogenase (gap) of Methanothermus fervidus.